The chain runs to 214 residues: Phosphoribosylglycinamide formyltransferase (214 aa).

Position 12–14 (12–14 (GSN)) interacts with N(1)-(5-phospho-beta-D-ribosyl)glycinamide. Residues 105–108 (LLIL) and N123 each bind (6R)-10-formyltetrahydrofolate. H125 serves as the catalytic Proton donor. D167 contributes to the (6R)-10-formyltetrahydrofolate binding site. N(1)-(5-phospho-beta-D-ribosyl)glycinamide is bound at residue E197.

This sequence belongs to the GART family.

The enzyme catalyses N(1)-(5-phospho-beta-D-ribosyl)glycinamide + (6R)-10-formyltetrahydrofolate = N(2)-formyl-N(1)-(5-phospho-beta-D-ribosyl)glycinamide + (6S)-5,6,7,8-tetrahydrofolate + H(+). It functions in the pathway purine metabolism; IMP biosynthesis via de novo pathway; N(2)-formyl-N(1)-(5-phospho-D-ribosyl)glycinamide from N(1)-(5-phospho-D-ribosyl)glycinamide (10-formyl THF route): step 1/1. In Saccharomyces cerevisiae (strain ATCC 204508 / S288c) (Baker's yeast), this protein is Phosphoribosylglycinamide formyltransferase.